A 601-amino-acid polypeptide reads, in one-letter code: ATP-dependent rRNA helicase SPB4 (601 aa).

Residues 14–42 (LAWSQASLQPWIHDAIDSLGFRSMTPVQA) carry the Q motif motif. The Helicase ATP-binding domain maps to 45 to 228 (IPLFCGNKDV…RTGMSNPVKI (184 aa)). 58–65 (AVTGSGKT) serves as a coordination point for ATP. The DEAD box signature appears at 176 to 179 (DEAD). Positions 257-419 (VLINMLSTLQ…AYKAFSKNLR (163 aa)) constitute a Helicase C-terminal domain. Positions 507–575 (KEKIRLETME…QIMNESSDEE (69 aa)) form a coiled coil. The segment covering 532–554 (LKVKNEAWSSKNEKKEGKQERRE) has biased composition (basic and acidic residues). Residues 532–576 (LKVKNEAWSSKNEKKEGKQERREKMKRKREAIEKQIMNESSDEET) form a disordered region.

It belongs to the DEAD box helicase family. DDX55/SPB4 subfamily. Component of pre-60S ribosomal complexes.

It is found in the nucleus. The protein resides in the nucleolus. The enzyme catalyses ATP + H2O = ADP + phosphate + H(+). ATP-binding RNA helicase involved in the biogenesis of 60S ribosomal subunits. Binds 90S pre-ribosomal particles and dissociates from pre-60S ribosomal particles after processing of 27SB pre-rRNA. Required for the normal formation of 18S rRNA through the processing of pre-rRNAs at sites A0, A1 and A2, and the normal formation of 25S and 5.8S rRNAs through the processing of pre-rRNAs at sites C1 and C2. This is ATP-dependent rRNA helicase SPB4 from Meyerozyma guilliermondii (strain ATCC 6260 / CBS 566 / DSM 6381 / JCM 1539 / NBRC 10279 / NRRL Y-324) (Yeast).